A 122-amino-acid polypeptide reads, in one-letter code: Large ribosomal subunit protein uL14 (122 aa).

It belongs to the universal ribosomal protein uL14 family. As to quaternary structure, part of the 50S ribosomal subunit. Forms a cluster with proteins L3 and L19. In the 70S ribosome, L14 and L19 interact and together make contacts with the 16S rRNA in bridges B5 and B8.

In terms of biological role, binds to 23S rRNA. Forms part of two intersubunit bridges in the 70S ribosome. The chain is Large ribosomal subunit protein uL14 from Shewanella woodyi (strain ATCC 51908 / MS32).